Consider the following 361-residue polypeptide: DNA polymerase subunit gamma-2, mitochondrial (361 aa).

Residues Met1–Arg18 constitute a mitochondrion transit peptide.

Component of the DNA polymerase gamma complex consisting of two subunits: the catalytic subunit DNApol-gamma/DNApolG1 and the accessory subunit PolG2/DNApol-gamma35. As to expression, expressed in ovaries (at protein level).

It is found in the mitochondrion. Functionally, as accessory component of the DNA polymerase gamma complex is involved in the replication of mitochondrial DNA. Does not bind DNA. Essential for mitochondrial DNA maintenance and larval development. The sequence is that of DNA polymerase subunit gamma-2, mitochondrial from Drosophila melanogaster (Fruit fly).